The sequence spans 116 residues: Beta-2-microglobulin (116 aa).

Positions 1-19 (MKFLLSFVVLAVFSASAFA) are cleaved as a signal peptide. Residues 24 to 111 (PKIQVYSRNP…RHLKETKNIS (88 aa)) enclose the Ig-like C1-type domain. Residues Cys44 and Cys99 are joined by a disulfide bond.

This sequence belongs to the beta-2-microglobulin family. As to quaternary structure, heterodimer of an alpha chain and a beta chain. Beta-2-microglobulin is the beta-chain of major histocompatibility complex class I molecules.

The protein resides in the secreted. Functionally, component of the class I major histocompatibility complex (MHC). Involved in the presentation of peptide antigens to the immune system. The sequence is that of Beta-2-microglobulin (b2m) from Ictalurus punctatus (Channel catfish).